Here is a 108-residue protein sequence, read N- to C-terminus: Large ribosomal subunit protein uL24 (108 aa).

The protein belongs to the universal ribosomal protein uL24 family. Part of the 50S ribosomal subunit.

One of two assembly initiator proteins, it binds directly to the 5'-end of the 23S rRNA, where it nucleates assembly of the 50S subunit. In terms of biological role, one of the proteins that surrounds the polypeptide exit tunnel on the outside of the subunit. This Pelobacter propionicus (strain DSM 2379 / NBRC 103807 / OttBd1) protein is Large ribosomal subunit protein uL24.